Consider the following 244-residue polypeptide: Cell adhesion molecule CEACAM4 (244 aa).

The N-terminal stretch at 1-35 is a signal peptide; it reads MGPPSAAPRGGHRPWQGLLITASLLTFWHPPTTVQ. The region spanning 36-139 is the Ig-like V-type domain; it reads FTIEALPSSA…DSDQATGQLH (104 aa). Over 36–155 the chain is Extracellular; it reads FTIEALPSSA…PGLPVGAVAG (120 aa). N-linked (GlcNAc...) asparagine glycans are attached at residues asparagine 57, asparagine 104, asparagine 111, and asparagine 126. The chain crosses the membrane as a helical span at residues 156-176; the sequence is IVTGVLVGVALVAALVCFLLL. Residues 177–244 are Cytoplasmic-facing; sequence SRTGRASIQR…QIDHKADVVS (68 aa). Positions 186-215 are disordered; that stretch reads RDLREQPPPASTPGHGPSHRSTFSAPLPSP. An ITAM motif is present at residues 222–236; that stretch reads YEELLYSDANIYCQI.

It belongs to the immunoglobulin superfamily. CEA family. In terms of assembly, interacts through its phosphorylated ITAM domain with the SH2 domain-containing cytoplasmic proteins involved in signaling processes during phagocytosis. N-glycosylated. Post-translationally, the cytoplasmic ITAM-like sequence becomes tyrosine phosphorylated by SRC family PTKs upon ligand-mediated receptor clustering and allows to initiate phagocytosis of bound ligand. As to expression, granulocytes.

The protein resides in the membrane. In terms of biological role, granulocyte orphan receptor that acts as an trigger efficient phagocytosis of attached particles. This is Cell adhesion molecule CEACAM4 from Homo sapiens (Human).